We begin with the raw amino-acid sequence, 63 residues long: Large ribosomal subunit protein uL29 (63 aa).

It belongs to the universal ribosomal protein uL29 family.

The chain is Large ribosomal subunit protein uL29 from Tolumonas auensis (strain DSM 9187 / NBRC 110442 / TA 4).